The sequence spans 171 residues: UPF0398 protein MGAS9429_Spy1349 (171 aa).

This sequence belongs to the UPF0398 family.

The protein is UPF0398 protein MGAS9429_Spy1349 of Streptococcus pyogenes serotype M12 (strain MGAS9429).